Consider the following 464-residue polypeptide: MREKTPKQIVDLLDKYIVGQNEAKKSVAIALYNRYRRAQLPEDVQKDITPKNILMAGPTGVGKTEIARRLADIVDAPFVKVEATKFTEVGYVGRDVESMVRDLANEAVRIVEKEEFVKVEGQAIRQANKTLVRLLVPGVKRNNRQNQMQQMQEMIQSLLAGGGMSEETEEVTDEIRNQRLSVAEKLDRGLLENEEVTIEVEQAPKANPMGDMMGQMGMDMSSMLGDMLPKKKVKRTLPVSQARKLLVQEEEKKLVNYDDIYQKAMDRAGQSGIIFIDEIDKITAADKRNSAGVSREGVQRDILPIVEGSTVSTKYGPLSTDHILFIAAGAFAESKPSDLIPELQGRFPIRVELDALTKDDFVRILKDPQNSLLKQYIALLKADGVDLVFTAEAVDKIAEIAFEVNQGTDNIGARRLATILEKLLEEVLYEGPDMEMGQITITQAYVEQKLSDIVKNKDLTKFIL.

Residues valine 18, 60–65, aspartate 277, glutamate 342, and arginine 414 contribute to the ATP site; that span reads GVGKTE.

Belongs to the ClpX chaperone family. HslU subfamily. As to quaternary structure, a double ring-shaped homohexamer of HslV is capped on each side by a ring-shaped HslU homohexamer. The assembly of the HslU/HslV complex is dependent on binding of ATP.

The protein resides in the cytoplasm. In terms of biological role, ATPase subunit of a proteasome-like degradation complex; this subunit has chaperone activity. The binding of ATP and its subsequent hydrolysis by HslU are essential for unfolding of protein substrates subsequently hydrolyzed by HslV. HslU recognizes the N-terminal part of its protein substrates and unfolds these before they are guided to HslV for hydrolysis. The chain is ATP-dependent protease ATPase subunit HslU from Lactobacillus leichmannii.